Here is a 71-residue protein sequence, read N- to C-terminus: Small ribosomal subunit protein bS21 (71 aa).

Residues 47–71 (RENATRAKRHAKRVARENARNTRLY) form a disordered region. The segment covering 60–71 (VARENARNTRLY) has biased composition (basic and acidic residues).

This sequence belongs to the bacterial ribosomal protein bS21 family.

The protein is Small ribosomal subunit protein bS21 of Actinobacillus succinogenes (strain ATCC 55618 / DSM 22257 / CCUG 43843 / 130Z).